The primary structure comprises 345 residues: MAKIAQNRQSVVILKSLQQLHTFGLPAHCTDFVSIKSVHSAHTFIAQHQKQPFYLLGQGSNTAFVADYKGTVAEVALKGIGVQENESHYIIKAAAGESWHELVVYCLKHTMYGFENLALIPGTVGAAPIQNIGAYGVEVERFIQSVQYIDLKTNQVHSIAAKDCEFGYRDSIFKHALWQKAMIVGVTFLLPKAWQPVVTYGELAALHAPSAQDIFNKVVEVRQAKLPDPSVLGNAGSFFKNPIISCDNLAALHQQFPSMPFYPLDTRTVKIPAAWLIDQLGFKGQFEGGIRCHPKQALVLTNAEQGTGEQLLSLARRIKNAVAEQFSIDLEHEVQLIGAKGRVLL.

The region spanning leucine 25–alanine 193 is the FAD-binding PCMH-type domain. Arginine 169 is an active-site residue. Serine 237 functions as the Proton donor in the catalytic mechanism. Glutamate 333 is a catalytic residue.

It belongs to the MurB family. FAD is required as a cofactor.

The protein localises to the cytoplasm. The enzyme catalyses UDP-N-acetyl-alpha-D-muramate + NADP(+) = UDP-N-acetyl-3-O-(1-carboxyvinyl)-alpha-D-glucosamine + NADPH + H(+). It participates in cell wall biogenesis; peptidoglycan biosynthesis. Cell wall formation. The polypeptide is UDP-N-acetylenolpyruvoylglucosamine reductase (Pseudoalteromonas atlantica (strain T6c / ATCC BAA-1087)).